The sequence spans 192 residues: DNA dC-&gt;dU-editing enzyme APOBEC-3Ca (192 aa).

The CMP/dCMP-type deaminase domain occupies 15–141 (IDPNTFRFHF…PNYQEGLCKL (127 aa)). Zn(2+) is bound at residue His69. The active-site Proton donor is the Glu71. Positions 100 and 103 each coordinate Zn(2+).

The protein belongs to the cytidine and deoxycytidylate deaminase family. (Microbial infection) Interacts with feline foamy virus protein Bet. This interaction does not induce APOBEC3Ca degradation but prevents its dimerization and incorporation into the virion. The cofactor is Zn(2+).

Its subcellular location is the nucleus. The protein resides in the cytoplasm. The enzyme catalyses a 2'-deoxycytidine in single-stranded DNA + H2O + H(+) = a 2'-deoxyuridine in single-stranded DNA + NH4(+). In terms of biological role, DNA deaminase (cytidine deaminase) which acts as an inhibitor of retrovirus replication and retrotransposon mobility via deaminase-dependent and -independent mechanisms. Selectively targets single-stranded DNA and does not deaminate double-stranded DNA or single- or double-stranded RNA. Does not reduce infectivity of foamy feline virus, feline immunodeficiency virus or feline leukemia virus. This is DNA dC-&gt;dU-editing enzyme APOBEC-3Ca from Felis catus (Cat).